The primary structure comprises 336 residues: MAAPILDPNAPAFTRRYMNLADPRLGAKALFASDEFFAPKERMLDPEPAVFIPGKYDDHGKWMDGWETRRKRTTGHDFCVVRLARPGVVYGVDLDTSHFTGNFPPAASIDACVSDADTPPDDAVWETLVPATTLAGNQHHYVDVSNPRAYTHLRVNLYPDGGLARLRVYGQPQRDWSRAARGELVDLAAIENGAYLVAANNEHFGPASRMLMPGRGANMGDGWETRRRREPGNDWAIVALARPGVIRRVEVDTAHFKGNFPDRCSLQAARVAGGTDASLVTQAMFWPMLLGEQPLGMDSVHTFETQLAALGPVTHVRLNIHPDGGVSRLRFWGELA.

This sequence belongs to the allantoicase family.

It catalyses the reaction allantoate + H2O = (S)-ureidoglycolate + urea. Its pathway is nitrogen metabolism; (S)-allantoin degradation; (S)-ureidoglycolate from allantoate (aminidohydrolase route): step 1/1. This is Probable allantoicase 2 from Burkholderia mallei (strain ATCC 23344).